A 177-amino-acid chain; its full sequence is ATP-dependent protease subunit HslV (177 aa).

Residue Thr-7 is part of the active site. Na(+) is bound by residues Ala-162, Cys-165, and Thr-168.

The protein belongs to the peptidase T1B family. HslV subfamily. In terms of assembly, a double ring-shaped homohexamer of HslV is capped on each side by a ring-shaped HslU homohexamer. The assembly of the HslU/HslV complex is dependent on binding of ATP.

It localises to the cytoplasm. It carries out the reaction ATP-dependent cleavage of peptide bonds with broad specificity.. With respect to regulation, allosterically activated by HslU binding. Its function is as follows. Protease subunit of a proteasome-like degradation complex believed to be a general protein degrading machinery. This chain is ATP-dependent protease subunit HslV, found in Leptospira biflexa serovar Patoc (strain Patoc 1 / Ames).